The sequence spans 296 residues: Phosphoribosylaminoimidazole-succinocarboxamide synthase (296 aa).

The protein belongs to the SAICAR synthetase family.

It catalyses the reaction 5-amino-1-(5-phospho-D-ribosyl)imidazole-4-carboxylate + L-aspartate + ATP = (2S)-2-[5-amino-1-(5-phospho-beta-D-ribosyl)imidazole-4-carboxamido]succinate + ADP + phosphate + 2 H(+). Its pathway is purine metabolism; IMP biosynthesis via de novo pathway; 5-amino-1-(5-phospho-D-ribosyl)imidazole-4-carboxamide from 5-amino-1-(5-phospho-D-ribosyl)imidazole-4-carboxylate: step 1/2. This Lachnospira eligens (strain ATCC 27750 / DSM 3376 / VPI C15-48 / C15-B4) (Eubacterium eligens) protein is Phosphoribosylaminoimidazole-succinocarboxamide synthase.